We begin with the raw amino-acid sequence, 1023 residues long: Lon protease homolog (1023 aa).

515-522 (GPPGVGKT) lines the ATP pocket. The Lon proteolytic domain occupies 810–1003 (TNMIGVINGL…IEIITDPNVI (194 aa)). The active site involves S906.

This sequence belongs to the peptidase S16 family.

This Acanthamoeba polyphaga (Amoeba) protein is Lon protease homolog.